The primary structure comprises 696 residues: D-(-)-3-hydroxybutyrate oligomer hydrolase (696 aa).

A signal peptide spans 1 to 26 (MTKLGWGRRVVWGAALAAVAMLGACN). Catalysis depends on Ser-309, which acts as the Charge relay system.

It belongs to the D-(-)-3-hydroxybutyrate oligomer hydrolase family.

It localises to the secreted. It carries out the reaction (3R)-hydroxybutanoate dimer + H2O = 2 (R)-3-hydroxybutanoate + H(+). Its pathway is lipid metabolism; butanoate metabolism. In terms of biological role, participates in the degradation of poly-3-hydroxybutyrate (PHB). It works downstream of poly(3-hydroxybutyrate) depolymerase, hydrolyzing D(-)-3-hydroxybutyrate oligomers of various length (3HB-oligomers) into 3HB-monomers. The sequence is that of D-(-)-3-hydroxybutyrate oligomer hydrolase from Burkholderia cenocepacia (strain HI2424).